Consider the following 677-residue polypeptide: Potassium channel KAT1 (677 aa).

Residues 1 to 63 (MSISWTRNFF…PFNPRYRAWE (63 aa)) are Cytoplasmic-facing. The chain crosses the membrane as a helical span at residues 64-84 (MWLVLLVIYSAWICPFQFAFI). Over 85–90 (TYKKDA) the chain is Extracellular. The chain crosses the membrane as a helical span at residues 91–111 (IFIIDNIVNGFFAIDIILTFF). Residues 112-134 (VAYLDSHSYLLVDSPKKIAIRYL) lie on the Cytoplasmic side of the membrane. A helical transmembrane segment spans residues 135 to 155 (STWFAFDVCSTAPFQPLSLLF). Over 156–165 (NYNGSELGFR) the chain is Extracellular. Residues 166-186 (ILSMLRLWRLRRVSSLFARLE) traverse the membrane as a helical; Voltage-sensor segment. Over 187–200 (KDIRFNYFWIRCTK) the chain is Cytoplasmic. Residues 201–221 (LISVTLFAIHCAGCFNYLIAD) form a helical membrane-spanning segment. The Extracellular portion of the chain corresponds to 222 to 248 (RYPNPRKTWIGAVYPNFKEASLWNRYV). Residues 249-268 (TALYWSITTLTTTGYGDFHA) constitute an intramembrane region (pore-forming). Residues 269 to 272 (ENPR) are Extracellular-facing. A helical transmembrane segment spans residues 273 to 293 (EMLFDIFFMMFNLGLTAYLIG). Topologically, residues 294–677 (NMTNLVVHWT…DGDHLYFSSN (384 aa)) are cytoplasmic. 377 to 496 (LFQGVSRNFL…RVIMNNLFMK (120 aa)) lines the a nucleoside 3',5'-cyclic phosphate pocket. Basic and acidic residues predominate over residues 568–577 (IERAKVERSS). Residues 568–601 (IERAKVERSSSETAGRSYANDSSKKDPYCSSSNQ) are disordered. Positions 612-677 (RVTIHMMSES…DGDHLYFSSN (66 aa)) constitute a KHA domain.

Belongs to the potassium channel family. Plant (TC 1.A.1.4) subfamily. In terms of assembly, the potassium channel is probably composed of a homo- or heterotetrameric complex of pore-forming subunits. May interact with AKT2 and KAT2. Interacts with SLAC1 and SLAH3. In terms of tissue distribution, expressed in guard cells, and in roots.

The protein localises to the membrane. Functionally, highly selective inward-rectifying potassium channel. This voltage-gated channel could mediate long-term potassium influx into guard cells leading to stomatal opening. Assuming opened or closed conformations in response to the voltage difference across the membrane, the channel is activated by hyperpolarization. The channel activity is enhanced upon external acidification. Also permeable to ammonium ions. Blocked by tetraethylammonium and barium ions. The chain is Potassium channel KAT1 (KAT1) from Arabidopsis thaliana (Mouse-ear cress).